The sequence spans 404 residues: Keratin, type I cuticular Ha3-I (404 aa).

Positions 1-56 are head; the sequence is MSYSCGLPSLSCRTSCSSRPCVPPSCHGCTLPGACNIPANVSNCNWFCEGSFNGSE. Positions 56–367 constitute an IF rod domain; that stretch reads EKETMQFLND…SLLESEDCKL (312 aa). The interval 57 to 91 is coil 1A; it reads KETMQFLNDRLASYLEKVRQLERDNAELENLIRER. The interval 92-102 is linker 1; sequence SQQQEPLVCAS. Residues 103-203 are coil 1B; it reads YQSYFKTIEE…HEQEVNTLRC (101 aa). The segment at 204-219 is linker 12; sequence QLGDRLNVEVDAAPTV. Positions 220–363 are coil 2; that stretch reads DLNQVLNETR…NTYRSLLESE (144 aa). The segment at 364–404 is tail; sequence DCKLPSNPCATTNACDKSTGPCISNPCGLRARCGPCNTFGY.

This sequence belongs to the intermediate filament family. In terms of tissue distribution, expressed in the hair follicles.

The chain is Keratin, type I cuticular Ha3-I (KRT33A) from Homo sapiens (Human).